The following is a 626-amino-acid chain: Kinesin-like protein Klp59C (626 aa).

Residues 1 to 183 are globular; the sequence is MDKLSIEQKI…VRSGTTNERI (183 aa). The interval 68-155 is disordered; the sequence is CSGGNAASAN…GKNEDPGNPN (88 aa). Residues 72–96 show a composition bias toward polar residues; it reads NAASANQTASISPRSMKQRIATGSL. A compositionally biased stretch (low complexity) spans 101–112; that stretch reads ATAPPRQQTAPP. Residues 113–150 are compositionally biased toward basic and acidic residues; sequence VREDEVVHQAERMRKERERRREAQARTRLDREQGKNED. A coiled-coil region spans residues 115–150; the sequence is EDEVVHQAERMRKERERRREAQARTRLDREQGKNED. The region spanning 187-521 is the Kinesin motor domain; sequence QIMVCVRKRP…LRYADRVKEL (335 aa). 277-284 contributes to the ATP binding site; that stretch reads GQTGSGKT. The interval 557 to 608 is disordered; the sequence is ASSTSMPGGGNQAQQHTNTANDLNRSQKPTSKPTYPTSGQQLVQRKGSSQRE.

It belongs to the TRAFAC class myosin-kinesin ATPase superfamily. Kinesin family. MCAK/KIF2 subfamily.

It is found in the chromosome. The protein localises to the centromere. It localises to the kinetochore. The protein resides in the cytoplasm. Its subcellular location is the cytoskeleton. It is found in the spindle pole. In terms of biological role, required during anaphase to drive sister chromatid separation to actively depolymerize kinetochore microtubules at their kinetochore-associated plus ends, thereby contributing to chromatid mobility through a 'Pac-man' mechanism. The sequence is that of Kinesin-like protein Klp59C (Klp59C) from Drosophila melanogaster (Fruit fly).